A 210-amino-acid chain; its full sequence is Thymidylate kinase (210 aa).

13–20 (GLEGAGKS) is a binding site for ATP.

It belongs to the thymidylate kinase family.

The catalysed reaction is dTMP + ATP = dTDP + ADP. Functionally, phosphorylation of dTMP to form dTDP in both de novo and salvage pathways of dTTP synthesis. This Shewanella loihica (strain ATCC BAA-1088 / PV-4) protein is Thymidylate kinase.